Here is a 662-residue protein sequence, read N- to C-terminus: Acetyl-coenzyme A synthetase (662 aa).

Residues 197–200 (RKGK) and Thr317 each bind CoA. ATP-binding positions include 393–395 (GEP), 417–422 (DTWWQT), Asp510, and Arg525. Residue Ser533 coordinates CoA. Position 536 (Arg536) interacts with ATP. Mg(2+) is bound by residues His549 and Val552. N6-acetyllysine is present on Lys623.

Belongs to the ATP-dependent AMP-binding enzyme family. Requires Mg(2+) as cofactor. Post-translationally, acetylated. Deacetylation by the SIR2-homolog deacetylase activates the enzyme.

It carries out the reaction acetate + ATP + CoA = acetyl-CoA + AMP + diphosphate. In terms of biological role, catalyzes the conversion of acetate into acetyl-CoA (AcCoA), an essential intermediate at the junction of anabolic and catabolic pathways. AcsA undergoes a two-step reaction. In the first half reaction, AcsA combines acetate with ATP to form acetyl-adenylate (AcAMP) intermediate. In the second half reaction, it can then transfer the acetyl group from AcAMP to the sulfhydryl group of CoA, forming the product AcCoA. The sequence is that of Acetyl-coenzyme A synthetase from Helicobacter pylori (strain HPAG1).